An 848-amino-acid chain; its full sequence is MSGFQTSDEVDISNSLKAFPVDIATDNQKDKHENVGENVSDEDDGNYIASKLLESNRRTKGKKGNGKASNFQSMGLNQTLLRAIFKKGFKAPTPIQRKTIPLLLEGRDVVGMARTGSGKTAAFVIPMIEHLKSTLANSNTRALILSPNRELALQTVKVVKDFSKGTDLRSVAIVGGVSLEEQFSLLSGKPDIVVATPGRFLHLKVEMKLELSSIEYVVFDEADRLFEMGFAAQLTEILHALPTSRQTLLFSATLPRTLVDFAKAGLQDPVLVRLDVESKVSADLQSAFFSVKTAEREAALLCILQDIIKLPLKDNVRPREIGNVNNPKKRKRALELALKGSESGSPDSTLVFVPTKHHVEYVSELLVQAGYSVSKIYGSLDQEARLNEINNFRLGKTNLLVVTDVASRGIDIPLLANVINYDFPPQPKVFVHRVGRTARAGRTGWAYSLVRAEDAGYLLDLQLFLNRPLVTSSKQVKTDSDCDFTKQIVLGSLPQELVAELLEWVQRIVSRDVELQQLSNVAARGEKLYFRTRATCSAESAKRAKELVDSKGWSSNNPLFGDVSVIEAEEKYAELLSKVSSYRPSETVFEIGQRGHLKTEAAEIMRKRRNKVKPKGIKSEVASDKITDSSPGNMSEASESELEEVFKNPKELSKKKTTDFKDKEYYMSHYAPKESIQETGYAINSGENFTTAARHAILDLTNDEGIEQSRKGGQRWDPKKKKFVNIINDEDGSKGSPKIIRGESGVKLPATYRSGRFDEWKASKAFGANDSPIRENKRYKHNKLQTPKPADKFRDNYHKQNKRNREAKERGIGIKVNSELKSAVEIRKARELKEKRLAKNNRPSKKHR.

The disordered stretch occupies residues 22-43; sequence DIATDNQKDKHENVGENVSDED. Positions 69 to 97 match the Q motif motif; it reads SNFQSMGLNQTLLRAIFKKGFKAPTPIQR. The Helicase ATP-binding domain maps to 100 to 272; it reads IPLLLEGRDV…KAGLQDPVLV (173 aa). Residue 113-120 coordinates ATP; sequence ARTGSGKT. The DEAD box signature appears at 220-223; the sequence is DEAD. The 151-residue stretch at 330-480 folds into the Helicase C-terminal domain; it reads RKRALELALK…TSSKQVKTDS (151 aa). The segment at 610-650 is disordered; sequence NKVKPKGIKSEVASDKITDSSPGNMSEASESELEEVFKNPK. Residues 617–627 are compositionally biased toward basic and acidic residues; the sequence is IKSEVASDKIT. A compositionally biased stretch (polar residues) spans 628 to 637; the sequence is DSSPGNMSEA. A phosphoserine mark is found at serine 638, serine 733, and serine 736. The tract at residues 768-813 is disordered; that stretch reads ANDSPIRENKRYKHNKLQTPKPADKFRDNYHKQNKRNREAKERGIG. A compositionally biased stretch (basic and acidic residues) spans 789-812; the sequence is PADKFRDNYHKQNKRNREAKERGI.

Belongs to the DEAD box helicase family. DDX54/DBP10 subfamily.

Its subcellular location is the nucleus. The protein localises to the nucleolus. It carries out the reaction ATP + H2O = ADP + phosphate + H(+). Its function is as follows. ATP-binding RNA helicase involved in the biogenesis of 60S ribosomal subunits and is required for the normal formation of 25S and 5.8S rRNAs. The polypeptide is ATP-dependent RNA helicase dbp10 (dbp10) (Schizosaccharomyces pombe (strain 972 / ATCC 24843) (Fission yeast)).